Here is a 458-residue protein sequence, read N- to C-terminus: MPN domain-containing protein (458 aa).

The tract at residues 1 to 37 (MGSEPPSSPQVVEEGADEEDEELSGAEDADLRSSSGR) is disordered. A compositionally biased stretch (acidic residues) spans 14–28 (EGADEEDEELSGAED). The RAMA domain occupies 42-137 (TRRGITLRVL…QYKTTWLHKY (96 aa)). The DNA site is built by Ser-94, Ser-96, and Trp-116. The tract at residues 147 to 175 (SEGEDDEMGDDDEEEGKTTIPVEDKNKKS) is disordered. The segment covering 148–161 (EGEDDEMGDDDEEE) has biased composition (acidic residues). The MPN domain maps to 229–364 (VAVSSNVLLL…VASTITPFWV (136 aa)). Zn(2+) contacts are provided by His-306, His-308, and Asp-319. The JAMM motif signature appears at 306 to 319 (HSHPRGPALPSLQD).

This sequence belongs to the peptidase M67 family. In terms of processing, degraded following binding to N(6)-methyladenosine methylated DNA (m6A).

In terms of biological role, probable protease. Acts as a sensor of N(6)-methyladenosine methylation on DNA (m6A): recognizes and binds m6A DNA, leading to its degradation. Binds only double strand DNA (dsDNA) in a sequence-independent manner. This chain is MPN domain-containing protein, found in Danio rerio (Zebrafish).